The primary structure comprises 392 residues: Vascular endothelial growth factor A, long form (392 aa).

Disordered stretches follow at residues 1 to 44 (MTDR…VEGV) and 73 to 174 (DKPI…GPGR). Residues 89-104 (PGPEKRGEEEKEEERG) are compositionally biased toward basic and acidic residues. Low complexity-rich tracts occupy residues 121 to 143 (AAVC…ASVP) and 158 to 174 (PRSP…GPGR). 3 disulfide bridges follow: Cys229-Cys271, Cys260-Cys305, and Cys264-Cys307. Asn278 is a glycosylation site (N-linked (GlcNAc...) asparagine). The span at 309–320 (PKKDRTKPEKKS) shows a compositional bias: basic and acidic residues. The tract at residues 309 to 337 (PKKDRTKPEKKSVRGKGKGQKRKRKKSRF) is disordered. Over residues 321-337 (VRGKGKGQKRKRKKSRF) the composition is skewed to basic residues.

The protein belongs to the PDGF/VEGF growth factor family. Homodimer; disulfide-linked. Also found as heterodimer with PGF. Interacts with NRP1. Interacts with isoform 2 of BSG. Interacts with CD82; this interaction inhibits VEGFA-mediated signaling pathway. Post-translationally, produced by use of an alternative upstream CUG codon and post-translationally processed into the N-terminal N-VEGF form and the C-terminal secreted VEGFA form. In terms of tissue distribution, in developing embryos, expressed mainly in the choroid plexus, paraventricular neuroepithelium, placenta and kidney glomeruli. Also found in bronchial epithelium, adrenal gland and in seminiferous tubules of testis. High expression continues in kidney glomeruli and choroid plexus in adults.

It localises to the cytoplasm. The protein resides in the nucleus. Its subcellular location is the secreted. It is found in the endoplasmic reticulum. The protein localises to the golgi apparatus. It localises to the extracellular space. The protein resides in the extracellular matrix. Its subcellular location is the cell membrane. Its function is as follows. Participates in the induction of key genes involved in the response to hypoxia and in the induction of angiogenesis such as HIF1A. Involved in protecting cells from hypoxia-mediated cell death. Growth factor active in angiogenesis, vasculogenesis and endothelial cell growth. Induces endothelial cell proliferation, promotes cell migration, inhibits apoptosis and induces permeabilization of blood vessels. Binds to the FLT1/VEGFR1 and KDR/VEGFR2 receptors, heparan sulfate and heparin. Binds to the NRP1/neuropilin-1 receptor. Binding to NRP1 receptor initiates a signaling pathway needed for motor neuron axon guidance and cell body migration, including for the caudal migration of facial motor neurons from rhombomere 4 to rhombomere 6 during embryonic development. Also binds the DEAR/FBXW7-AS1 receptor. May play a role in increasing vascular permeability during lactation, when increased transport of molecules from the blood is required for efficient milk protein synthesis. This chain is Vascular endothelial growth factor A, long form (Vegfa), found in Mus musculus (Mouse).